A 485-amino-acid chain; its full sequence is Glutamyl-tRNA(Gln) amidotransferase subunit A (485 aa).

Active-site charge relay system residues include K79 and S154. S178 acts as the Acyl-ester intermediate in catalysis.

Belongs to the amidase family. GatA subfamily. As to quaternary structure, heterotrimer of A, B and C subunits.

The catalysed reaction is L-glutamyl-tRNA(Gln) + L-glutamine + ATP + H2O = L-glutaminyl-tRNA(Gln) + L-glutamate + ADP + phosphate + H(+). Its function is as follows. Allows the formation of correctly charged Gln-tRNA(Gln) through the transamidation of misacylated Glu-tRNA(Gln) in organisms which lack glutaminyl-tRNA synthetase. The reaction takes place in the presence of glutamine and ATP through an activated gamma-phospho-Glu-tRNA(Gln). In Clostridium botulinum (strain Alaska E43 / Type E3), this protein is Glutamyl-tRNA(Gln) amidotransferase subunit A.